The chain runs to 962 residues: MYHFVSEQTPELRLSAEALVTSRVTQYLKSFQLDAVRFVYDRLAKREFCILNDESGLGKVATVAALLSALPPAKKTLVVLQNDEQLLTGWRFHLDTLTDLQVYIIQGVHDTTDSPHSVYLAKWSQLRSIGDLSRLKFDYIMVDNRGHSLNNSFCTSMLLKQFEGRVNVLISSVDITSDVKLLYNVLRLGDRLEHQYKSFSRFDRKFHLPDPKEVFSKRIDLEEYYKQRGFLSEYIKDFRLRRFRHQFDKTLPLVAPEQYKHNLNLWLASKNSQSTLSGSEVCSTVASIENNPPQQNETVLVEESDRISEHSVDDVVAMSPLIFESSESDDEPITVDPVANENPVLVVSSDDCEIVTPPNTPPNRTPLVNKSPRTKSKKKCSKKPSPCKEADLTDSEKDDEGLTMPPRKSTRAATVHFTPKTRRLNVRLLRVSLDALSTPTPSGATTAIITPKTEPSARRKNRTKQPMDVGRPATRGMQRLTRSAESKINSKYLKHHVLDDAKRNFPRRIKAEGNQTPKTSKRIVKQESKAKAKPEQKKKIKTVDKPAQETPKRKPGRPRKCKTLTETLGKSKTKPNSKPLPPTPQVLSGSSLSSEYMQCAQRIPDDLDAIESPAFRVPFTPQQTPMLLTLPSTHNLLNDSEVVAIPLFKDQVETVVINSSHDESSPQDPSQSRRTKALKRKRKPDAPVNSSFGGGLGLPQAKRSATNKSPDLFSISSDLSQIPLAQPRPSSPFEGFKIFGSEVKQFQQQHAKVTIPAPKKKRDRSCLDILEQMFEPRLQQSSKTSPKVLPTLPLIQKDDATTTFTQRRGTLLEDDFFEITNNGQFGSRMRLNASGEVSPVQQDQQSVRPTQANKITNYLIGSVITQERTQPSNGNRNSIVASLRKSPKSPKHGARTTQATKLTRWFGSVFGGGASQTSSVESVSAPSTPVNPSTSAAACQTRTARSGGATGPTKRKRLELFK.

Disordered regions lie at residues 353–413, 438–590, 658–712, 866–900, and 916–962; these read EIVT…TRAA, TPTP…LSGS, NSSH…SPDL, QERT…TQAT, and QTSS…ELFK. Positions 372–382 are enriched in basic residues; the sequence is PRTKSKKKCSK. The span at 386–395 shows a compositional bias: basic and acidic residues; sequence PCKEADLTDS. 2 stretches are compositionally biased toward polar residues: residues 438–448 and 480–489; these read TPTPSGATTAI and LTRSAESKIN. Residues 524–552 are compositionally biased toward basic and acidic residues; that stretch reads VKQESKAKAKPEQKKKIKTVDKPAQETPK. Residues 553–562 show a composition bias toward basic residues; sequence RKPGRPRKCK. A compositionally biased stretch (polar residues) spans 564-576; it reads LTETLGKSKTKPN. Residues 673 to 683 are compositionally biased toward basic residues; the sequence is RRTKALKRKRK. Composition is skewed to polar residues over residues 703 to 712 and 866 to 880; these read RSATNKSPDL and QERT…NSIV. Basic residues predominate over residues 885-894; the sequence is KSPKSPKHGA. A compositionally biased stretch (polar residues) spans 916–944; the sequence is QTSSVESVSAPSTPVNPSTSAAACQTRTA. Residues 953-962 show a composition bias toward basic residues; that stretch reads TKRKRLELFK.

The protein resides in the nucleus. It is found in the chromosome. Required for underreplication of DNA, which is found in many late replicating euchromatic regions of salivary gland polytene chromosomes. Controls chromatin organization in polytene chromosomes. This Drosophila erecta (Fruit fly) protein is Protein suppressor of underreplication (SuUR).